The sequence spans 950 residues: Xylosyltransferase 1 (950 aa).

The Cytoplasmic portion of the chain corresponds to 1 to 17 (MVAAPSARRLVRRSHSA). Residues 18-38 (LLAALTVLLLQTLVGWNFSSL) form a helical; Signal-anchor for type II membrane protein membrane-spanning segment. At 39-950 (HSGAGERRGG…GAVKPDGRLR (912 aa)) the chain is on the lumenal side. The interval 42 to 246 (AGERRGGAAA…ELRYDQPPKC (205 aa)) is disordered. Positions 91–104 (PPARARARALAGCP) are enriched in low complexity. The span at 134–150 (KVRTDSNNENSVPKDFE) shows a compositional bias: basic and acidic residues. The segment covering 152-161 (VDNSNFAPRT) has biased composition (polar residues). The span at 166 to 193 (HQPELAKKPPSRQKELLKRRLEQEEKGK) shows a compositional bias: basic and acidic residues. The N-linked (GlcNAc...) asparagine glycan is linked to Asn-215. 4 disulfides stabilise this stretch: Cys-246–Cys-274, Cys-290–Cys-531, Cys-550–Cys-563, and Cys-552–Cys-561. UDP-alpha-D-xylose is bound by residues Val-322, Asp-350, and 379–381 (TIW). The N-linked (GlcNAc...) asparagine glycan is linked to Asn-410. 483–484 (DW) lines the UDP-alpha-D-xylose pocket. Residues Ser-564 and 587-588 (RK) each bind UDP-alpha-D-xylose. Disulfide bonds link Cys-664-Cys-918 and Cys-911-Cys-924. Asn-768 carries an N-linked (GlcNAc...) asparagine glycan. Residues 931-950 (SFSPDPKSELGAVKPDGRLR) are disordered.

It belongs to the glycosyltransferase 14 family. XylT subfamily. As to quaternary structure, monomer. A divalent metal cation is required as a cofactor. In terms of processing, contains 7 disulfide bonds. Post-translationally, N-glycosylated.

The protein resides in the golgi apparatus membrane. It catalyses the reaction UDP-alpha-D-xylose + L-seryl-[protein] = 3-O-(beta-D-xylosyl)-L-seryl-[protein] + UDP + H(+). The protein operates within glycan metabolism; chondroitin sulfate biosynthesis. It functions in the pathway glycan metabolism; heparan sulfate biosynthesis. Its function is as follows. Catalyzes the first step in the biosynthesis of chondroitin sulfate and dermatan sulfate proteoglycans, such as DCN. Transfers D-xylose from UDP-D-xylose to specific serine residues of the core protein. Required for normal maturation of chondrocytes during bone development, normal onset of ossification and normal embryonic and postnatal skeleton development, especially of the long bones. This is Xylosyltransferase 1 (XYLT1) from Canis lupus familiaris (Dog).